A 224-amino-acid chain; its full sequence is N6-methyladenosine RNA demethylase ALKBH (224 aa).

The Fe2OG dioxygenase domain maps to 93–222 (LAQAAIVNFY…RINLNVRQMR (130 aa)). Fe cation contacts are provided by His-111, Asp-113, and His-178. Residue Arg-213 participates in 2-oxoglutarate binding.

The protein belongs to the alkB family. The cofactor is Fe(2+).

The catalysed reaction is an N(6)-methyladenosine in mRNA + 2-oxoglutarate + O2 = an adenosine in mRNA + formaldehyde + succinate + CO2. RNA demethylase that regulates the stability of mRNAs through an m(6)A-dependent manner. M6A is a modification present at internal sites of mRNAs and some non-coding RNAs and plays a role in mRNA stability and processing. Demethylate m6A at position A1935 within the 3'UTR of transcription factor ZAP1 and plays an important role in C.parasitica development and virulence. Target mRNAs are primarily associated with amino-acid biosynthesis, 2-oxocarboxylic acid metabolism, and ABC transporters, as well as alpha-amino acid metabolism, small-molecule biosynthesis, and the sulfite reductase complex (NADPH). The polypeptide is N6-methyladenosine RNA demethylase ALKBH (Cryphonectria parasitica (strain ATCC 38755 / EP155)).